The primary structure comprises 318 residues: Mitochondrial thiamine pyrophosphate carrier (318 aa).

3 Solcar repeats span residues 13-106 (ISNV…LTEL), 116-202 (RDFS…LKRA), and 214-309 (NGNF…FCNF). The helical transmembrane segment at 19–39 (AVAGSVSGLVTRVLISPLDVI) threads the bilayer. S51 bears the Phosphoserine mark. 4 helical membrane-spanning segments follow: residues 87–107 (LLSIGYGAVQFLSFEALTELV), 122–142 (FLCGGLSACVATLAVHPVDVL), 173–193 (VFYKGLNPTLIAIFPYAGFQF), and 220–240 (LLCGSGAGVISKTLTYPLDLF). Residues 241–246 (KKRLQV) carry the Substrate recognition motif. Residues 293 to 313 (ALSTGLVFFWYELFCNFFHHM) form a helical membrane-spanning segment.

Belongs to the mitochondrial carrier (TC 2.A.29) family.

The protein resides in the mitochondrion membrane. It carries out the reaction thiamine phosphate(out) + thiamine diphosphate(in) = thiamine phosphate(in) + thiamine diphosphate(out). Functionally, mitochondrial transporter mediating uptake of thiamine diphosphate into mitochondria. It is not clear if the antiporter activity is affected by the membrane potential or by the proton electrochemical gradient. The polypeptide is Mitochondrial thiamine pyrophosphate carrier (SLC25A19) (Bos taurus (Bovine)).